The chain runs to 131 residues: Peptide methionine sulfoxide reductase MsrB (131 aa).

The MsrB domain occupies 8–130; that stretch reads LDEWRSMLDP…NSVCIDLRPR (123 aa). Cys47, Cys50, Cys96, and Cys99 together coordinate Zn(2+). Cys119 (nucleophile) is an active-site residue.

Belongs to the MsrB Met sulfoxide reductase family. It depends on Zn(2+) as a cofactor.

It carries out the reaction L-methionyl-[protein] + [thioredoxin]-disulfide + H2O = L-methionyl-(R)-S-oxide-[protein] + [thioredoxin]-dithiol. This is Peptide methionine sulfoxide reductase MsrB from Pseudomonas putida (strain ATCC 47054 / DSM 6125 / CFBP 8728 / NCIMB 11950 / KT2440).